The chain runs to 568 residues: DEAD-box ATP-dependent RNA helicase 51 (568 aa).

Basic and acidic residues-rich tracts occupy residues 1-13 (MVESDKSSVEELK) and 23-47 (KKNEQQKAEEKTHTVEENADETQKK). The interval 1-70 (MVESDKSSVE…EEEEKVEAME (70 aa)) is disordered. The stretch at 13–78 (KKRVRKRSRG…MEDGEDEKNI (66 aa)) forms a coiled coil. Acidic residues predominate over residues 60-70 (EEEEEKVEAME). The Q motif motif lies at 89 to 117 (VTFDSLDLSEQTSIAIKEMGFQYMTQIQA). The region spanning 120-295 (IQPLLEGKDV…RVSLTSPVHV (176 aa)) is the Helicase ATP-binding domain. Residue 133-140 (ARTGSGKT) coordinates ATP. The short motif at 243-246 (DEAD) is the DEAD box element. A Helicase C-terminal domain is found at 321-468 (RLILLISFLK…ELEFNEKRLS (148 aa)). Positions 540–568 (KVRKARKQQGRNGFSPYSPYGKSTPTKEA) are disordered.

This sequence belongs to the DEAD box helicase family. DDX18/HAS1 subfamily.

It carries out the reaction ATP + H2O = ADP + phosphate + H(+). This chain is DEAD-box ATP-dependent RNA helicase 51 (RH51), found in Arabidopsis thaliana (Mouse-ear cress).